We begin with the raw amino-acid sequence, 193 residues long: Tetrahydromethanopterin S-methyltransferase subunit A 2 (193 aa).

Topologically, residues 1–38 (MADKKPTAENWPVVSGDYIVGDPESPVAVTTLASHNED) are cytoplasmic. A helical membrane pass occupies residues 39–58 (IPAAAGAAIAGPCKTENLGI). At 59 to 193 (EKVVANIISN…SESEKIESEA (135 aa)) the chain is on the extracellular side. His-84 contributes to the 5-hydroxybenzimidazolylcob(I)amide binding site. The interval 174 to 193 (SKKSSFVESSSESEKIESEA) is disordered.

Belongs to the MtrA family. In terms of assembly, the complex is composed of 8 subunits; MtrA, MtrB, MtrC, MtrD, MtrE, MtrF, MtrG and MtrH. 5-hydroxybenzimidazolylcob(I)amide is required as a cofactor.

It localises to the cell membrane. The catalysed reaction is 5-methyl-5,6,7,8-tetrahydromethanopterin + coenzyme M + 2 Na(+)(in) = 5,6,7,8-tetrahydromethanopterin + methyl-coenzyme M + 2 Na(+)(out). Its pathway is one-carbon metabolism; methanogenesis from CO(2); methyl-coenzyme M from 5,10-methylene-5,6,7,8-tetrahydromethanopterin: step 2/2. Part of a complex that catalyzes the formation of methyl-coenzyme M and tetrahydromethanopterin from coenzyme M and methyl-tetrahydromethanopterin. This is an energy-conserving, sodium-ion translocating step. This chain is Tetrahydromethanopterin S-methyltransferase subunit A 2, found in Methanobrevibacter ruminantium (strain ATCC 35063 / DSM 1093 / JCM 13430 / OCM 146 / M1) (Methanobacterium ruminantium).